A 258-amino-acid chain; its full sequence is uncharacterized protein (258 aa).

The next 4 helical transmembrane spans lie at 33-53 (LFVI…VTTN), 59-79 (FDSW…IFVF), 88-108 (LLYL…FSFF), and 140-160 (IIAL…WLIQ). The segment at 237–258 (NNKINSELQPPSILNKNSKPIE) is disordered. Positions 242–258 (SELQPPSILNKNSKPIE) are enriched in polar residues.

It is found in the membrane. This is an uncharacterized protein from Dictyostelium discoideum (Social amoeba).